The primary structure comprises 153 residues: Ribosome maturation factor RimP (153 aa).

It belongs to the RimP family.

The protein localises to the cytoplasm. Functionally, required for maturation of 30S ribosomal subunits. This chain is Ribosome maturation factor RimP, found in Clostridium tetani (strain Massachusetts / E88).